Reading from the N-terminus, the 362-residue chain is Phosphoserine aminotransferase (362 aa).

An L-glutamate-binding site is contributed by Arg-43. Pyridoxal 5'-phosphate is bound by residues 77–78 (AR), Trp-103, Thr-153, Asp-173, and Gln-196. Lys-197 bears the N6-(pyridoxal phosphate)lysine mark.

The protein belongs to the class-V pyridoxal-phosphate-dependent aminotransferase family. SerC subfamily. In terms of assembly, homodimer. Pyridoxal 5'-phosphate is required as a cofactor.

It localises to the cytoplasm. The catalysed reaction is O-phospho-L-serine + 2-oxoglutarate = 3-phosphooxypyruvate + L-glutamate. The enzyme catalyses 4-(phosphooxy)-L-threonine + 2-oxoglutarate = (R)-3-hydroxy-2-oxo-4-phosphooxybutanoate + L-glutamate. Its pathway is amino-acid biosynthesis; L-serine biosynthesis; L-serine from 3-phospho-D-glycerate: step 2/3. The protein operates within cofactor biosynthesis; pyridoxine 5'-phosphate biosynthesis; pyridoxine 5'-phosphate from D-erythrose 4-phosphate: step 3/5. Catalyzes the reversible conversion of 3-phosphohydroxypyruvate to phosphoserine and of 3-hydroxy-2-oxo-4-phosphonooxybutanoate to phosphohydroxythreonine. This Legionella pneumophila (strain Lens) protein is Phosphoserine aminotransferase.